Consider the following 282-residue polypeptide: 4-hydroxybenzoate octaprenyltransferase (282 aa).

9 helical membrane-spanning segments follow: residues 17-37 (IGIL…NQGF), 40-60 (IDLL…GCVI), 90-110 (AFIL…KLPI), 113-133 (FYFA…KRFL), 135-155 (APQL…FIAS), 163-183 (FIVL…MYAM), 207-227 (LIIA…AINK), 231-251 (WFFY…LKLI), and 262-282 (AFLV…LALI).

This sequence belongs to the UbiA prenyltransferase family. The cofactor is Mg(2+).

The protein localises to the cell inner membrane. It catalyses the reaction all-trans-octaprenyl diphosphate + 4-hydroxybenzoate = 4-hydroxy-3-(all-trans-octaprenyl)benzoate + diphosphate. It participates in cofactor biosynthesis; ubiquinone biosynthesis. In terms of biological role, catalyzes the prenylation of para-hydroxybenzoate (PHB) with an all-trans polyprenyl group. Mediates the second step in the final reaction sequence of ubiquinone-8 (UQ-8) biosynthesis, which is the condensation of the polyisoprenoid side chain with PHB, generating the first membrane-bound Q intermediate 3-octaprenyl-4-hydroxybenzoate. This chain is 4-hydroxybenzoate octaprenyltransferase, found in Legionella pneumophila (strain Corby).